The chain runs to 277 residues: MGIKVYKPTTNGRRNMTSLDFAEITTNTPEKSLLVSLKNKAGRNNNGRITVRHQGGGHKRHYRLIDFKRNKDGVEAVVKTIEYDPNRTANIALVHYTDGVKAYILAPKGLEVGQRIISGPEADIKVGNALPLANIPVGTVIHNIELQPGKGAELIRAAGASAQVLGQEGKYVLVRLQSGEVRMILGTCRATIGTVGNEQQSLVNIGKAGRNRWKGVRPTVRGSVMNPNDHPHGGGEGKAPVGRKAPSTPWGKPALGLKTRNKKAKSDKLIVRRRNQK.

The interval 222-277 (GSVMNPNDHPHGGGEGKAPVGRKAPSTPWGKPALGLKTRNKKAKSDKLIVRRRNQK) is disordered.

It belongs to the universal ribosomal protein uL2 family. Part of the 50S ribosomal subunit. Forms a bridge to the 30S subunit in the 70S ribosome.

One of the primary rRNA binding proteins. Required for association of the 30S and 50S subunits to form the 70S ribosome, for tRNA binding and peptide bond formation. It has been suggested to have peptidyltransferase activity; this is somewhat controversial. Makes several contacts with the 16S rRNA in the 70S ribosome. This Streptococcus agalactiae serotype Ia (strain ATCC 27591 / A909 / CDC SS700) protein is Large ribosomal subunit protein uL2.